The primary structure comprises 603 residues: uncharacterized protein (603 aa).

Positions 4-79 (YRIRVTTVDQ…VTFHLVIAVF (76 aa)) constitute a Ubiquitin-like domain. Disordered regions lie at residues 85 to 121 (TLPSATSSSVPQSRTSELSSTNSIPTPRITSLNPEEL), 159 to 178 (SLPTHEQSSPVAESLDNSVS), and 206 to 348 (AQES…NQPF). Composition is skewed to polar residues over residues 94 to 117 (VPQSRTSELSSTNSIPTPRITSLN) and 162 to 178 (THEQSSPVAESLDNSVS). The span at 219-231 (SSSSAPLASDQSP) shows a compositional bias: low complexity. The span at 246-264 (LGSNSGLNPRSPNSFSSPL) shows a compositional bias: polar residues. The span at 280-289 (SLSPLSNSSS) shows a compositional bias: low complexity. Residues 290-314 (INQVHQNETHGSTISVPNPNLSQMG) show a composition bias toward polar residues. The segment covering 315 to 329 (PSHSSSVPSNLSPNP) has biased composition (low complexity). Residues 330–348 (AQNENPSTTSIPSINNQPF) are compositionally biased toward polar residues. A helical membrane pass occupies residues 496 to 516 (ILLTSIMSVVFLLQTGALAPF). Positions 544–578 (TAQRVVEIPNETQTEDEQDGTNTPDNRADAEEREL) are disordered. Position 566 is a phosphothreonine (Thr-566). The span at 569–578 (NRADAEEREL) shows a compositional bias: basic and acidic residues.

The protein resides in the endoplasmic reticulum membrane. This is an uncharacterized protein from Schizosaccharomyces pombe (strain 972 / ATCC 24843) (Fission yeast).